A 302-amino-acid polypeptide reads, in one-letter code: uncharacterized protein (302 aa).

3 disordered regions span residues 81–100, 155–209, and 269–302; these read ETSD…ERAA, TVTG…PVNP, and LRIE…ALLN. A compositionally biased stretch (low complexity) spans 196–209; sequence PSLPSSLVSSPVNP.

This is an uncharacterized protein from Ictalurid herpesvirus 1 (strain Auburn) (IcHV-1).